Here is a 151-residue protein sequence, read N- to C-terminus: Protein archease-like (151 aa).

Positions 20, 150, and 151 each coordinate Ca(2+).

It belongs to the archease family.

Component of the tRNA-splicing ligase complex required to facilitate the enzymatic turnover of catalytic subunit RtcB. In Dictyostelium discoideum (Social amoeba), this protein is Protein archease-like.